Reading from the N-terminus, the 82-residue chain is Small ribosomal subunit protein uS17 (82 aa).

Belongs to the universal ribosomal protein uS17 family. In terms of assembly, part of the 30S ribosomal subunit.

Its function is as follows. One of the primary rRNA binding proteins, it binds specifically to the 5'-end of 16S ribosomal RNA. This Rickettsia rickettsii (strain Iowa) protein is Small ribosomal subunit protein uS17.